The following is a 78-amino-acid chain: MSRVCQVTGKRPVSGNNRSHAMNATKRRFLPNLHSHRFWVESEKRFVTLRVSAKGMRVIDKKGIETVLADLCVRGEKY.

The tract at residues 1–21 (MSRVCQVTGKRPVSGNNRSHA) is disordered.

This sequence belongs to the bacterial ribosomal protein bL28 family.

The protein is Large ribosomal subunit protein bL28 of Sodalis glossinidius (strain morsitans).